Consider the following 207-residue polypeptide: Outer-membrane lipoprotein LolB (207 aa).

Residues 1–21 (MPLPDFRLIRLLPLAALVLTA) form the signal peptide. Cys-22 carries the N-palmitoyl cysteine lipid modification. A lipid anchor (S-diacylglycerol cysteine) is attached at Cys-22.

The protein belongs to the LolB family. In terms of assembly, monomer.

Its subcellular location is the cell outer membrane. In terms of biological role, plays a critical role in the incorporation of lipoproteins in the outer membrane after they are released by the LolA protein. The polypeptide is Outer-membrane lipoprotein LolB (Escherichia coli (strain K12 / MC4100 / BW2952)).